The following is a 173-amino-acid chain: Calcium-binding protein 5 (173 aa).

EF-hand domains follow at residues D28–M63, G82–A99, I105–E140, and L142–R173. The Ca(2+) site is built by D41, D43, D45, and D52. Ca(2+)-binding residues include D118, N120, D122, E124, E129, D155, N157, D159, T161, and E166.

As to quaternary structure, interacts with CACNA1C (via C-terminal CDB motif) in a calcium-dependent manner. Interacts with STXBP1. Interacts with MYO6. Retina.

It is found in the cytoplasm. Functionally, inhibits calcium-dependent inactivation of L-type calcium channel and shifts voltage dependence of activation to more depolarized membrane potentials. Involved in the transmission of light signals. May positively regulate neurotransmitter vesicle endocytosis and exocytosis in a salt-dependent manner. May play a role in the extension and network organization of neurites. This Homo sapiens (Human) protein is Calcium-binding protein 5 (CABP5).